Consider the following 96-residue polypeptide: Large ribosomal subunit protein uL23 (96 aa).

It belongs to the universal ribosomal protein uL23 family. In terms of assembly, part of the 50S ribosomal subunit. Contacts protein L29, and trigger factor when it is bound to the ribosome.

In terms of biological role, one of the early assembly proteins it binds 23S rRNA. One of the proteins that surrounds the polypeptide exit tunnel on the outside of the ribosome. Forms the main docking site for trigger factor binding to the ribosome. This chain is Large ribosomal subunit protein uL23, found in Ruthia magnifica subsp. Calyptogena magnifica.